Here is a 198-residue protein sequence, read N- to C-terminus: Glycerol-3-phosphate acyltransferase (198 aa).

A run of 5 helical transmembrane segments spans residues 5–25 (LILLSLLAYVIGSIPSGLWIG), 56–76 (SIVTVMDILKGTVATLLPFFF), 84–104 (FWLLTGAFAIIGHSFPLFAGF), 114–134 (AGVILAYAPLLFVAALVVFLV), and 158–178 (LFMGDWILIILVACIALFVIW).

The protein belongs to the PlsY family. In terms of assembly, probably interacts with PlsX.

It is found in the cell membrane. It catalyses the reaction an acyl phosphate + sn-glycerol 3-phosphate = a 1-acyl-sn-glycero-3-phosphate + phosphate. It participates in lipid metabolism; phospholipid metabolism. In terms of biological role, catalyzes the transfer of an acyl group from acyl-phosphate (acyl-PO(4)) to glycerol-3-phosphate (G3P) to form lysophosphatidic acid (LPA). This enzyme utilizes acyl-phosphate as fatty acyl donor, but not acyl-CoA or acyl-ACP. This is Glycerol-3-phosphate acyltransferase from Listeria monocytogenes serotype 4b (strain CLIP80459).